The sequence spans 446 residues: Exodeoxyribonuclease 7 large subunit (446 aa).

Belongs to the XseA family. Heterooligomer composed of large and small subunits.

The protein resides in the cytoplasm. The enzyme catalyses Exonucleolytic cleavage in either 5'- to 3'- or 3'- to 5'-direction to yield nucleoside 5'-phosphates.. Its function is as follows. Bidirectionally degrades single-stranded DNA into large acid-insoluble oligonucleotides, which are then degraded further into small acid-soluble oligonucleotides. The polypeptide is Exodeoxyribonuclease 7 large subunit (Acholeplasma laidlawii (strain PG-8A)).